Consider the following 454-residue polypeptide: Toluate 1,2-dioxygenase subunit alpha (454 aa).

Positions 51-148 (IYLAHESQIP…SFDCDGSHDL (98 aa)) constitute a Rieske domain. [2Fe-2S] cluster contacts are provided by Cys-92, His-94, Cys-112, and His-115. 2 residues coordinate Fe cation: His-221 and His-226.

Belongs to the bacterial ring-hydroxylating dioxygenase alpha subunit family. In terms of assembly, this dioxygenase system consists of three proteins: the two subunits of the hydroxylase component (XylX and XylY), and an electron transfer component (XylZ). [2Fe-2S] cluster is required as a cofactor. Requires Fe cation as cofactor.

The protein operates within xenobiotic degradation; toluene degradation. The protein is Toluate 1,2-dioxygenase subunit alpha (xylX) of Pseudomonas putida (Arthrobacter siderocapsulatus).